We begin with the raw amino-acid sequence, 310 residues long: Phytoene synthase 2, chloroplastic (310 aa).

A chloroplast-targeting transit peptide spans 1–25; it reads DPDIVLPGNLGLLSEAYDRCGEVCA.

The protein belongs to the phytoene/squalene synthase family. In terms of assembly, monomer.

The protein resides in the plastid. The protein localises to the chloroplast. The catalysed reaction is 2 (2E,6E,10E)-geranylgeranyl diphosphate = 15-cis-phytoene + 2 diphosphate. The protein operates within carotenoid biosynthesis; phytoene biosynthesis; all-trans-phytoene from geranylgeranyl diphosphate: step 1/1. Catalyzes the reaction from prephytoene diphosphate to phytoene. This chain is Phytoene synthase 2, chloroplastic (PSY2), found in Solanum lycopersicum (Tomato).